Here is a 111-residue protein sequence, read N- to C-terminus: Nascent polypeptide-associated complex protein (111 aa).

In terms of domain architecture, NAC-A/B spans 3–72 (GMNPRQMKKL…EEVREVLEIS (70 aa)).

This sequence belongs to the NAC-alpha family. As to quaternary structure, homodimer. Interacts with the ribosome. Binds ribosomal RNA.

Contacts the emerging nascent chain on the ribosome. The polypeptide is Nascent polypeptide-associated complex protein (Thermococcus kodakarensis (strain ATCC BAA-918 / JCM 12380 / KOD1) (Pyrococcus kodakaraensis (strain KOD1))).